A 182-amino-acid chain; its full sequence is Adenylate kinase (182 aa).

Residue 12–17 participates in ATP binding; the sequence is GAGKGT. The NMP stretch occupies residues 32-61; the sequence is STGDLLRAEVGAKTPLGQEAAAVMNRGELV. Residues threonine 33, arginine 38, 59–61, 85–88, and glutamine 92 each bind AMP; these read ELV and GFPR. The tract at residues 126–132 is LID; sequence SRGRSDD. Arginine 127 is a binding site for ATP. Arginine 129 and arginine 140 together coordinate AMP. Glycine 168 contacts ATP.

It belongs to the adenylate kinase family. In terms of assembly, monomer.

The protein localises to the cytoplasm. The catalysed reaction is AMP + ATP = 2 ADP. It participates in purine metabolism; AMP biosynthesis via salvage pathway; AMP from ADP: step 1/1. Catalyzes the reversible transfer of the terminal phosphate group between ATP and AMP. Plays an important role in cellular energy homeostasis and in adenine nucleotide metabolism. This chain is Adenylate kinase, found in Prochlorococcus marinus (strain MIT 9303).